The primary structure comprises 717 residues: Epithelial splicing regulatory protein 2 (717 aa).

The segment covering 1 to 14 (MTPPPPPPPPPGPD) has biased composition (pro residues). The tract at residues 1–23 (MTPPPPPPPPPGPDPAVDSATDP) is disordered. Phosphoserine is present on Ser83. 3 consecutive RRM domains span residues 247–343 (TVVR…RFLS), 348–428 (VILR…RSTA), and 465–545 (DCVR…PCST). Ser563 is subject to Phosphoserine.

The protein belongs to the ESRP family. Interacts with RBPMS. In terms of tissue distribution, epithelial cell-specific.

Its subcellular location is the nucleus. Its function is as follows. mRNA splicing factor that regulates the formation of epithelial cell-specific isoforms. Specifically regulates the expression of FGFR2-IIIb, an epithelial cell-specific isoform of FGFR2. Also regulates the splicing of CD44, CTNND1, ENAH, 3 transcripts that undergo changes in splicing during the epithelial-to-mesenchymal transition (EMT). Acts by directly binding specific sequences in mRNAs. Binds the GU-rich sequence motifs in the ISE/ISS-3, a cis-element regulatory region present in the mRNA of FGFR2. This chain is Epithelial splicing regulatory protein 2 (Esrp2), found in Mus musculus (Mouse).